Reading from the N-terminus, the 815-residue chain is MEVISINNTNCNNINNNIDNTNIDTNSIHNKNNIDNNIDNNNIDNNSIGNNNNNIDNNNNNIANNNINNINNIDNNIDNNNNIDNNNNKNNSNNYNNIDNNNNNNNNNNNNNNNNNNIDNYNLVNNNNNNNNNSEISTPNFPYNNNNLTNLNSDNNIGVQVIFENISYKTENRNYKKQIKDEKKRKKKLEMERSNSSNSNSSYDVESSASGLQTPQQSRSSILPTNSLNISKIDQSMNPQQTRSTTNGKIEKEITILSNVSGIIEKSEMVGLFGPSGSGKSTLLDILANRKSTGTISGKILVNGKEIGDAYKKYCSYVTQDEILLQTSTVEETLKFHADLRLPGLSDQDKWKVVEQVIKDIGLTKKSKSKIGGILPGGMIVKGLSGGEKKRVSIGCALVTNPSLLFLDEPTSGLDSLNALKVMKVLMNLTVIKGVTVICSIHQPRPEIYHLFNKIMIMLKGRMIYCGNDVLNYLSSLPNQYQCPNYTNPADFILDTCHEISECDHYEEICESWETNWRDNMLAVSRIQPFNRSIEPNKSCSLLYQYKILLNRNFKDFFRNSTQYITRLSGGFMIGLLFSACFGTLSPSQEDVLKISGILFFLIAVLNLIPFTCITLFLSNREVFNSERASKIYHSLPFYLSTITTEAFIQFLVSLIVSLLVYTINHLRWNFSSFFITYFILYLINLLSDLYIIAISNITGKSDLTFIYGTTISITFLLFMGHLVPVKQLPKSFGWIHWLNPLYYGYATVMVAQFKDYPLECPNDFCQFPNGNDVLKFYNLEDWTLQKGIGIIILWICFFFVSGYWAISKLNKEKR.

Disordered stretches follow at residues 81–141 and 177–249; these read NNID…TPNF and KQIK…TNGK. A coiled-coil region spans residues 164-199; sequence ENISYKTENRNYKKQIKDEKKRKKKLEMERSNSSNS. A compositionally biased stretch (low complexity) spans 194–210; sequence SNSSNSNSSYDVESSAS. Residues 211-248 are compositionally biased toward polar residues; sequence GLQTPQQSRSSILPTNSLNISKIDQSMNPQQTRSTTNG. Residues 242 to 485 enclose the ABC transporter domain; that stretch reads TRSTTNGKIE…SLPNQYQCPN (244 aa). Residue 274–281 coordinates ATP; that stretch reads GPSGSGKS. Positions 562–810 constitute an ABC transmembrane type-2 domain; it reads TQYITRLSGG…VSGYWAISKL (249 aa). Helical transmembrane passes span 568–588, 598–618, 647–667, 675–695, 706–726, 732–752, and 788–808; these read LSGG…LSPS, ILFF…TLFL, AFIQ…INHL, FITY…IIAI, FIYG…LVPV, SFGW…VMVA, and GIGI…WAIS.

This sequence belongs to the ABC transporter superfamily. ABCG family.

It localises to the membrane. This Dictyostelium discoideum (Social amoeba) protein is ABC transporter G family member 7 (abcG7).